The primary structure comprises 167 residues: Photosystem I assembly protein Ycf3 (167 aa).

3 TPR repeats span residues 35–68, 72–105, and 120–153; these read AFTY…EVDA, SYIF…NPSL, and GEQA…APTN.

The protein belongs to the Ycf3 family.

It is found in the plastid. The protein resides in the chloroplast thylakoid membrane. In terms of biological role, essential for the assembly of the photosystem I (PSI) complex. May act as a chaperone-like factor to guide the assembly of the PSI subunits. The polypeptide is Photosystem I assembly protein Ycf3 (Pleurastrum terricola (Filamentous green alga)).